The primary structure comprises 338 residues: Phytanoyl-CoA dioxygenase, peroxisomal (338 aa).

A peroxisome-targeting transit peptide spans 1 to 30 (MDYTRAGARLQVLLGHLGRPSALQIVAHPV). 2 positions are modified to N6-succinyllysine: Lys59 and Lys108. 2-oxoglutarate contacts are provided by residues Lys120, Met157, 175-177 (HQD), and Trp193. Positions 175 and 177 each coordinate Fe cation. An N6-succinyllysine mark is found at Lys231 and Lys252. Position 264 (His264) interacts with Fe cation. Residues Ser266 and Arg275 each coordinate 2-oxoglutarate.

Belongs to the PhyH family. In terms of assembly, interacts specifically with FKBP52 and PHYHIP. Fe cation serves as cofactor. Requires L-ascorbate as cofactor. It depends on ATP as a cofactor. The cofactor is Mg(2+).

It localises to the peroxisome. The enzyme catalyses phytanoyl-CoA + 2-oxoglutarate + O2 = 2-hydroxyphytanoyl-CoA + succinate + CO2. The catalysed reaction is 3-methylhexadecanoyl-CoA + 2-oxoglutarate + O2 = 2-hydroxy-3-methylhexadecanoyl-CoA + succinate + CO2. It catalyses the reaction hexadecanoyl-CoA + 2-oxoglutarate + O2 = 2-hydroxyhexadecanoyl-CoA + succinate + CO2. It carries out the reaction octanoyl-CoA + 2-oxoglutarate + O2 = 2-hydroxyoctanoyl-CoA + succinate + CO2. The enzyme catalyses decanoyl-CoA + 2-oxoglutarate + O2 = 2-hydroxydecanoyl-CoA + succinate + CO2. The catalysed reaction is 3-methylbutanoyl-CoA + 2-oxoglutarate + O2 = 2-hydroxy-3-methylbutanoyl-CoA + succinate + CO2. It catalyses the reaction heptadecanoyl-CoA + 2-oxoglutarate + O2 = 2-hydroxyheptadecanoyl-CoA + succinate + CO2. It carries out the reaction eicosanoyl-CoA + 2-oxoglutarate + O2 = 2-hydroxyeicosanoyl-CoA + succinate + CO2. The enzyme catalyses octadecanoyl-CoA + 2-oxoglutarate + O2 = 2-hydroxyoctadecanoyl-CoA + succinate + CO2. The catalysed reaction is dodecanoyl-CoA + 2-oxoglutarate + O2 = 2-hydroxydodecanoyl-CoA + succinate + CO2. It catalyses the reaction tetradecanoyl-CoA + 2-oxoglutarate + O2 = 2-hydroxytetradecanoyl-CoA + succinate + CO2. It carries out the reaction hexanoyl-CoA + 2-oxoglutarate + O2 = 2-hydroxyhexanoyl-CoA + succinate + CO2. The enzyme catalyses butanoyl-CoA + 2-oxoglutarate + O2 = 2-hydroxybutanoyl-CoA + succinate + CO2. The catalysed reaction is 3-methylnonanoyl-CoA + 2-oxoglutarate + O2 = 2-hydroxy-3-methylnonanoyl-CoA + succinate + CO2. It catalyses the reaction 3-methylundecanoyl-CoA + 2-oxoglutarate + O2 = 2-hydroxy-3-methylundecanoyl-CoA + succinate + CO2. It carries out the reaction 3-methyldodecanoyl-CoA + 2-oxoglutarate + O2 = 2-hydroxy-3-methyldodecanoyl-CoA + succinate + CO2. It functions in the pathway lipid metabolism; fatty acid metabolism. Catalyzes the 2-hydroxylation of racemic phytanoyl-CoA and the isomers of 3-methylhexadecanoyl-CoA. Shows activity also towards a variety of other mono-branched 3-methylacyl-CoA esters (with a chain length of at least seven carbon atoms) and straight-chain acyl-CoA esters (with a chain length longer than four carbon atoms). Does not hydroxylate long and very long straight chain acyl-CoAs or 2-methyl-and 4-methyl-branched acyl-CoAs. In Rattus norvegicus (Rat), this protein is Phytanoyl-CoA dioxygenase, peroxisomal (Phyh).